A 467-amino-acid polypeptide reads, in one-letter code: MPATKFSRRTLLTAGSALAVLPFLRALPVQAREPRETVDIKDYPADDGIASFKQAFADGQTVVVPPGWVCENINAAITIPAGKTLRVQGAVRGNGRGRFILQDGCQVVGEQGGSLHNVTLDVRGSDCVIKGVAMSGFGPVAQIFIGGKEPQVMRNLIIDDITVTHANYAILRQGFHNQMDGARITHSRFSDLQGDAIEWNVAIHDRDILISDHVIERINCTNGKINWGIGIGLAGSTYDNSYPEDQAVKNFVVANITGSDCRQLVHVENGKHFVIRNVKAKNITPGFSKNAGIDNATIAIYGCDNFVIDNIDMTNSAGMLIGYGVVKGKYLSIPQNFKLNAIRLDNRQVAYKLRGIQISSGNTPSFVAITNVRMTRATLELHNQPQHLFLRNINVMQTSAIGPALKMHFDLRKDVRGQFMARQDTLLSLANVHAINENGQSSVDIDRINHQTVNVEAVNFSLPKRGG.

Its pathway is slime biogenesis; slime polysaccharide biosynthesis. This chain is Colanic acid biosynthesis protein WcaM (wcaM), found in Salmonella typhimurium (strain LT2 / SGSC1412 / ATCC 700720).